Here is a 218-residue protein sequence, read N- to C-terminus: DNA-directed RNA polymerase III subunit RPC7-like (218 aa).

The segment at Leu133–Tyr218 is disordered. Basic and acidic residues predominate over residues Lys139–Glu160. Acidic residues-rich tracts occupy residues Val161–Asp193 and Asn201–Tyr218.

The protein belongs to the eukaryotic RPC7 RNA polymerase subunit family. In terms of assembly, component of the RNA polymerase III (Pol III) complex consisting of 17 subunits. Pol III exists as two alternative complexes defined by the mutually exclusive incorporation of subunit POLR3G/RPC7alpha or POLR3GL/RPC7beta. Found in a trimeric complex with POLR3C/RPC3 and POLR3F/RPC6. Directly interacts with POLR3C. In terms of tissue distribution, widely expressed. Expressed in CD4-positive T cells.

Its subcellular location is the nucleus. DNA-dependent RNA polymerase catalyzes the transcription of DNA into RNA using the four ribonucleoside triphosphates as substrates. Specific peripheric component of RNA polymerase III which synthesizes small RNAs, such as 5S rRNA and tRNAs. This Homo sapiens (Human) protein is DNA-directed RNA polymerase III subunit RPC7-like.